Consider the following 1298-residue polypeptide: MSQFSTEDEAELQTLLRKLLKSVKDRISGAPSVECAEEILLHLEETDKNFHNYEFVKYLREYVESSLGAVIEVETENFTKGEGHAVGSGQDTLVHAVTKNTRESTQYKQMMQTLKQTMMMVVESLINKFEEDQMKREEMDRKIQHQQSISQYADNCSDSDSSFNQSYAFIKHEQLQVIAEKLDPGRPREVRWEALQSLCHAPPSDVLSCESWTGLRRNLSTALTDPDPELSDKVLQFFAKTFSSSPLNVTKDIYASIGNTKTLEAHFLYHKLSFPSGTTSIDANRPDMARLLKQMRLMNDFQKEVTTFWIRHPEKYMEEIIENTLSLLALHSEQGMSSPGSEKSLEPIHLISLLDIKATWFKKWMHGYYSRTVVLRLLERKYKSLIVNALQQCIYYFDSCDALSEETLEMIHSLEHQQIGPAGRTLYTSKELEFVYFVHSLCVLGRLVMYTNGRKFFPIKVKKRRDPVTLTDLVVILINIMYQHPKPSCGETALADTMSPTNLVMEVLRTLCDRTECAVECLYQIPVIETLLAPLITLLTGKLPKLNSMESALTHTADTLARIATTERGLSLLLYDRNLVSAEGESISAAHLIVQFTQKLLAKELQVENSSSMSGAFIFVCRQMYNTCEGLQVLRPYSLHECIAQAWRTTSSMSERVPTPVPGAPPALASQELQSVVAWEEMLLDNLLNFAATPKGLLLLQQTGAINECVTYMFSRFTKKLQVSRCEKFGYGVMVTQVATTAPGIVALQSSGFVQTIVVELWSALECGREDVRVVHPKSTPMDPIDRSCLKSFLSLVNLLSSPHAVWELLGHRALPNKTEYNLREMATSVLDLMDRLIIINSDAKIHSLFNYEQSHTFGLRLLSVLCCNLDSFLLLESQYKLTDLLLQGQRDNVTEPPSGEGEFIIDGLSVERNHILVRICAVGGPSERKLPPRALQKGNDPYPWPMVSTYPLPKYYIFDVPKILRTKQESEIGAFLTSSKETERDASWMDDCRRQFCKIMATKSNTLTGYVLADLLEMVVLHLSSSSNDCFFPPAEYKVVDNSVKTRSLSSVEQLGVEISLRYGKFLKLLREDSEQDLCLLLKHCQEFLSQQRVKVTSELCGYPGHDWFASTVFLLMHGDVGRSLSLLLRFSRLLPSAFLWPPRLHSSVHLPIEIAQSAIHPIYSCTAHYVEMLLKAEVPLVFSAFRMSGFTPSQICVQWLGQCFWNYLDWPEICQYVTTCVIMGPDYQVYMCVSALRHLQQDILQHTQTQDLQVFLKEEPIQGFRVSNYLEYMEGLERSYRSMVLSDMRSILPRSS.

A Rab-GAP TBC domain is found at 1171-1283 (YVEMLLKAEV…YMEGLERSYR (113 aa)).

As to quaternary structure, interacts with cdk20, which promotes cdk20 stability and function.

The protein localises to the cytoplasm. The protein resides in the cell projection. Its subcellular location is the cilium. In terms of biological role, required for high-level Shh responses in the developing neural tube. Together with cdk20, controls the structure of the primary cilium by coordinating assembly of the ciliary membrane and axoneme, allowing gli2 to be properly activated in response to SHH signaling. The protein is Protein broad-minded (tbc1d32) of Danio rerio (Zebrafish).